Consider the following 384-residue polypeptide: N-acetyldiaminopimelate deacetylase (384 aa).

Residue Asp75 is part of the active site. Catalysis depends on Glu134, which acts as the Proton acceptor.

This sequence belongs to the peptidase M20A family. N-acetyldiaminopimelate deacetylase subfamily.

The catalysed reaction is N-acetyl-(2S,6S)-2,6-diaminopimelate + H2O = (2S,6S)-2,6-diaminopimelate + acetate. It functions in the pathway amino-acid biosynthesis; L-lysine biosynthesis via DAP pathway; LL-2,6-diaminopimelate from (S)-tetrahydrodipicolinate (acetylase route): step 3/3. In terms of biological role, catalyzes the conversion of N-acetyl-diaminopimelate to diaminopimelate and acetate. This is N-acetyldiaminopimelate deacetylase from Lactobacillus helveticus (strain DPC 4571).